The following is a 349-amino-acid chain: GTPase Obg (349 aa).

Residues 1 to 159 (MKFLDEAKVY…RWIWLRLKLI (159 aa)) form the Obg domain. Residues 160-327 (ADAGLVGLPN…ALRALVAVIG (168 aa)) enclose the OBG-type G domain. GTP-binding positions include 166–173 (GLPNAGKS), 191–195 (FTTLH), 212–215 (DIPG), 279–282 (NKID), and 308–310 (SGV). Mg(2+)-binding residues include serine 173 and threonine 193.

The protein belongs to the TRAFAC class OBG-HflX-like GTPase superfamily. OBG GTPase family. As to quaternary structure, monomer. Requires Mg(2+) as cofactor.

The protein localises to the cytoplasm. In terms of biological role, an essential GTPase which binds GTP, GDP and possibly (p)ppGpp with moderate affinity, with high nucleotide exchange rates and a fairly low GTP hydrolysis rate. Plays a role in control of the cell cycle, stress response, ribosome biogenesis and in those bacteria that undergo differentiation, in morphogenesis control. This chain is GTPase Obg, found in Rhodopseudomonas palustris (strain BisA53).